Reading from the N-terminus, the 182-residue chain is Adenine phosphoribosyltransferase (182 aa).

Belongs to the purine/pyrimidine phosphoribosyltransferase family. Homodimer.

The protein resides in the cytoplasm. The catalysed reaction is AMP + diphosphate = 5-phospho-alpha-D-ribose 1-diphosphate + adenine. The protein operates within purine metabolism; AMP biosynthesis via salvage pathway; AMP from adenine: step 1/1. In terms of biological role, catalyzes a salvage reaction resulting in the formation of AMP, that is energically less costly than de novo synthesis. In Pseudomonas syringae pv. tomato (strain ATCC BAA-871 / DC3000), this protein is Adenine phosphoribosyltransferase.